We begin with the raw amino-acid sequence, 172 residues long: MNPFRWSFRAQFLLGFLACAGLLAYAIYVQLHLGLEPCPLCIFQRIAFAALAVFFLLGALHGPRAAAGRKVYGVLSFIAAGVGMGIAARHVWVQIRPKDMMSSCGPPLSFLSETMGPFEVFRTVLTGTGDCGNIDWRFLGLSMPMWSMVWFVGLALWALYAGFKVRRSSVHH.

The Cytoplasmic segment spans residues 1-11 (MNPFRWSFRAQ). The chain crosses the membrane as a helical span at residues 12 to 28 (FLLGFLACAGLLAYAIY). The Periplasmic segment spans residues 29 to 46 (VQLHLGLEPCPLCIFQRI). Residues Cys38 and Cys41 are joined by a disulfide bond. The chain crosses the membrane as a helical span at residues 47–63 (AFAALAVFFLLGALHGP). Over 64 to 70 (RAAAGRK) the chain is Cytoplasmic. A helical membrane pass occupies residues 71 to 88 (VYGVLSFIAAGVGMGIAA). The Periplasmic segment spans residues 89 to 145 (RHVWVQIRPKDMMSSCGPPLSFLSETMGPFEVFRTVLTGTGDCGNIDWRFLGLSMPM). The cysteines at positions 104 and 131 are disulfide-linked. Residues 146 to 164 (WSMVWFVGLALWALYAGFK) traverse the membrane as a helical segment. At 165 to 172 (VRRSSVHH) the chain is on the cytoplasmic side.

Belongs to the DsbB family.

It is found in the cell inner membrane. In terms of biological role, required for disulfide bond formation in some periplasmic proteins. Acts by oxidizing the DsbA protein. The sequence is that of Disulfide bond formation protein B from Xanthomonas axonopodis pv. citri (strain 306).